Reading from the N-terminus, the 256-residue chain is Protein RKD4 (256 aa).

The RWP-RK domain occupies 130-216; it reads EKVTVKKKRN…MEEEVKNLEE (87 aa). The stretch at 190 to 224 forms a coiled coil; it reads RKLKSLNSLIKNLKNVGMEEEVKNLEEHRFLIEQE.

Its subcellular location is the nucleus. In terms of biological role, putative transcription factor. The polypeptide is Protein RKD4 (RKD4) (Arabidopsis thaliana (Mouse-ear cress)).